The following is a 529-amino-acid chain: Bifunctional purine biosynthesis protein PurH (529 aa).

One can recognise an MGS-like domain in the interval 1-148; the sequence is MQQRRPVRRA…KNHKDVAIVV (148 aa).

This sequence belongs to the PurH family.

It carries out the reaction (6R)-10-formyltetrahydrofolate + 5-amino-1-(5-phospho-beta-D-ribosyl)imidazole-4-carboxamide = 5-formamido-1-(5-phospho-D-ribosyl)imidazole-4-carboxamide + (6S)-5,6,7,8-tetrahydrofolate. The catalysed reaction is IMP + H2O = 5-formamido-1-(5-phospho-D-ribosyl)imidazole-4-carboxamide. The protein operates within purine metabolism; IMP biosynthesis via de novo pathway; 5-formamido-1-(5-phospho-D-ribosyl)imidazole-4-carboxamide from 5-amino-1-(5-phospho-D-ribosyl)imidazole-4-carboxamide (10-formyl THF route): step 1/1. It functions in the pathway purine metabolism; IMP biosynthesis via de novo pathway; IMP from 5-formamido-1-(5-phospho-D-ribosyl)imidazole-4-carboxamide: step 1/1. The chain is Bifunctional purine biosynthesis protein PurH from Salmonella newport (strain SL254).